Here is a 177-residue protein sequence, read N- to C-terminus: ATP synthase subunit delta (177 aa).

Belongs to the ATPase delta chain family. As to quaternary structure, F-type ATPases have 2 components, F(1) - the catalytic core - and F(0) - the membrane proton channel. F(1) has five subunits: alpha(3), beta(3), gamma(1), delta(1), epsilon(1). F(0) has three main subunits: a(1), b(2) and c(10-14). The alpha and beta chains form an alternating ring which encloses part of the gamma chain. F(1) is attached to F(0) by a central stalk formed by the gamma and epsilon chains, while a peripheral stalk is formed by the delta and b chains.

It is found in the cell inner membrane. In terms of biological role, f(1)F(0) ATP synthase produces ATP from ADP in the presence of a proton or sodium gradient. F-type ATPases consist of two structural domains, F(1) containing the extramembraneous catalytic core and F(0) containing the membrane proton channel, linked together by a central stalk and a peripheral stalk. During catalysis, ATP synthesis in the catalytic domain of F(1) is coupled via a rotary mechanism of the central stalk subunits to proton translocation. Its function is as follows. This protein is part of the stalk that links CF(0) to CF(1). It either transmits conformational changes from CF(0) to CF(1) or is implicated in proton conduction. This is ATP synthase subunit delta from Shewanella denitrificans (strain OS217 / ATCC BAA-1090 / DSM 15013).